The chain runs to 324 residues: tRNA N6-adenosine threonylcarbamoyltransferase (324 aa).

3 residues coordinate Fe cation: His-107, His-111, and Tyr-127. Residues 127-131, Asp-159, Gly-172, Glu-176, and Asn-257 each bind substrate; that span reads YVSGG. Asp-285 is a binding site for Fe cation.

Belongs to the KAE1 / TsaD family. In terms of assembly, monomer. Component of the KEOPS complex that consists of Kae1, Bud32, Cgi121 and Pcc1; the whole complex dimerizes. Fe(2+) is required as a cofactor.

The protein resides in the cytoplasm. The enzyme catalyses L-threonylcarbamoyladenylate + adenosine(37) in tRNA = N(6)-L-threonylcarbamoyladenosine(37) in tRNA + AMP + H(+). Functionally, required for the formation of a threonylcarbamoyl group on adenosine at position 37 (t(6)A37) in tRNAs that read codons beginning with adenine. Is a component of the KEOPS complex that is probably involved in the transfer of the threonylcarbamoyl moiety of threonylcarbamoyl-AMP (TC-AMP) to the N6 group of A37. Kae1 likely plays a direct catalytic role in this reaction, but requires other protein(s) of the complex to fulfill this activity. The sequence is that of tRNA N6-adenosine threonylcarbamoyltransferase from Thermococcus sibiricus (strain DSM 12597 / MM 739).